Consider the following 103-residue polypeptide: V-type sodium ATPase subunit G (103 aa).

It belongs to the V-ATPase F subunit family.

Functionally, involved in ATP-driven sodium extrusion. This Enterococcus hirae (strain ATCC 9790 / DSM 20160 / JCM 8729 / LMG 6399 / NBRC 3181 / NCIMB 6459 / NCDO 1258 / NCTC 12367 / WDCM 00089 / R) protein is V-type sodium ATPase subunit G (ntpG).